Here is a 79-residue protein sequence, read N- to C-terminus: Cell division protein ZapB (79 aa).

Positions 4–78 form a coiled coil; the sequence is EVFEKLEAKV…LQALLGKMEE (75 aa).

The protein belongs to the ZapB family. In terms of assembly, homodimer. The ends of the coiled-coil dimer bind to each other, forming polymers. Interacts with FtsZ.

The protein resides in the cytoplasm. Its function is as follows. Non-essential, abundant cell division factor that is required for proper Z-ring formation. It is recruited early to the divisome by direct interaction with FtsZ, stimulating Z-ring assembly and thereby promoting cell division earlier in the cell cycle. Its recruitment to the Z-ring requires functional FtsA or ZipA. This is Cell division protein ZapB from Cronobacter sakazakii (strain ATCC BAA-894) (Enterobacter sakazakii).